We begin with the raw amino-acid sequence, 207 residues long: MATYAAFKHVELYNVGKAKKRVLRAPGGGSSDIFGSDMPQTPRNVKNRMASNIFSADKDAAQKNNVRQGAHRFYFIGDAPRRGQKPVDSYSRLFGEPARPITPGKNHMKSSIPFGQNTNAAQQLLANNKGKYNGKSGSVSSASSSVSSSTENLKINVGNRSDGNPVTGEGYKAGGNDYIQPTAAMNGGNQVINKNRVPPGGYSSGLW.

Ser-30 bears the Phosphoserine mark. Thr-41 and Thr-102 each carry phosphothreonine. Residues Ser-111, Ser-138, and Ser-149 each carry the phosphoserine modification. Disordered stretches follow at residues 129 to 174 (KGKY…YKAG) and 188 to 207 (GNQV…SGLW). Positions 136 to 149 (SGSVSSASSSVSSS) are enriched in low complexity. Positions 150–164 (TENLKINVGNRSDGN) are enriched in polar residues.

The protein belongs to the MAP Jupiter family.

Its subcellular location is the nucleus. The protein resides in the cytoplasm. The protein localises to the cytoskeleton. It localises to the spindle. In terms of biological role, binds to all microtubule populations. This Drosophila grimshawi (Hawaiian fruit fly) protein is Microtubule-associated protein Jupiter.